The following is a 184-amino-acid chain: Thymidine kinase (184 aa).

ATP is bound by residues 9-16 (AAMNSGKS) and 82-85 (DEAQ). Catalysis depends on E83, which acts as the Proton acceptor. Residues C140, C142, C177, and C180 each coordinate Zn(2+).

Belongs to the thymidine kinase family. As to quaternary structure, homotetramer.

It is found in the cytoplasm. It carries out the reaction thymidine + ATP = dTMP + ADP + H(+). In Chromobacterium violaceum (strain ATCC 12472 / DSM 30191 / JCM 1249 / CCUG 213 / NBRC 12614 / NCIMB 9131 / NCTC 9757 / MK), this protein is Thymidine kinase.